An 807-amino-acid chain; its full sequence is MNKFVSQSTIDTFFDGKHADPFSVLGMHETSNGIEVRVLLPDAEKVFVLSKETKNVLCELSRVDERGFFAGVVPNTHSFFAYQLEVYWGNEAQVIEDPYAFHPMINELDNWLLAEGSHKRPYEILGAHFTECDNVAGVNFRLWAPNAKRVSVVGDFNYWDGRRHPMRFHQSSGIWELFLPKVSLGQLYKFELLDCHNQLRLKADPYAFSSQLRPDTASQIGALPEIVSMTEKRRKANQADQPISIYEVHLGSWRRNLENNFWLDYDQIAEELIPYVKDMGFTHIELLPLSEFPFDGSWGYQPIGLYSPTSRFGTAEGFKRLVNKAHKAGINVILDWVPGHFPSDTHGLVAFDGTALYEHADPKEGYHQDWNTLIYNYGRHEVKNYLASNALYWMERFGLDGIRVDAVASMIYRDYSREDGQWIPNQYGGRENLEAIEFLKQTNHLLGTEIPGVVSIAEESTSFAGVTHPPYEGGLGFHFKWNMGWMNDTLSYMKKDPIYRQHHHSQMTFGMVYQYSENFILPLSHDEVVHGKCSLLGKMPGDAWQKFANLRAYYGYMWGYPGKKLLFMGNEFAQGREWNYQESLDWYLLDEFHGGGWHKAVQDYVRDLNHIYQKNAPLFELDTDPQGFEWLVVDDYQNSVFVFERRSKKDERIIVISNFTPVLRQNYRFGVNIAGEYMEILNSDAQQYMGSNSTNTSKIVTEDIESHNKAQSISIDIPPLATVYLKLHKVKKVRKMRKTSKVEDTAVKTEKKIAKGKTTRTKKTVADTVSEATEVKPKKTVTKRAVVKKVKNAEVIAESTSVENNVS.

The active-site Nucleophile is the aspartate 405. The active-site Proton donor is the glutamate 458.

It belongs to the glycosyl hydrolase 13 family. GlgB subfamily. In terms of assembly, monomer.

It carries out the reaction Transfers a segment of a (1-&gt;4)-alpha-D-glucan chain to a primary hydroxy group in a similar glucan chain.. It participates in glycan biosynthesis; glycogen biosynthesis. Its function is as follows. Catalyzes the formation of the alpha-1,6-glucosidic linkages in glycogen by scission of a 1,4-alpha-linked oligosaccharide from growing alpha-1,4-glucan chains and the subsequent attachment of the oligosaccharide to the alpha-1,6 position. This is 1,4-alpha-glucan branching enzyme GlgB from Histophilus somni (strain 129Pt) (Haemophilus somnus).